A 159-amino-acid chain; its full sequence is Troponin C, skeletal muscle (159 aa).

Threonine 1 is modified (N-acetylthreonine). EF-hand domains are found at residues 14 to 49, 50 to 85, 90 to 125, and 126 to 159; these read EMIA…LGQT, PTKE…QMKE, KSEE…SGEH, and VTDE…EGVQ. Residues aspartate 27, aspartate 29, aspartate 33, glutamate 38, aspartate 63, aspartate 65, serine 67, threonine 69, glutamate 74, aspartate 103, asparagine 105, aspartate 107, tyrosine 109, glutamate 114, aspartate 139, asparagine 141, aspartate 143, arginine 145, and glutamate 150 each coordinate Ca(2+).

It belongs to the troponin C family.

In terms of biological role, troponin is the central regulatory protein of striated muscle contraction. Tn consists of three components: Tn-I which is the inhibitor of actomyosin ATPase, Tn-T which contains the binding site for tropomyosin and Tn-C. The binding of calcium to Tn-C abolishes the inhibitory action of Tn on actin filaments. The sequence is that of Troponin C, skeletal muscle (TNNC2) from Sus scrofa (Pig).